Reading from the N-terminus, the 190-residue chain is Probable nicotinate-nucleotide adenylyltransferase (190 aa).

The protein belongs to the NadD family.

It catalyses the reaction nicotinate beta-D-ribonucleotide + ATP + H(+) = deamido-NAD(+) + diphosphate. The protein operates within cofactor biosynthesis; NAD(+) biosynthesis; deamido-NAD(+) from nicotinate D-ribonucleotide: step 1/1. In terms of biological role, catalyzes the reversible adenylation of nicotinate mononucleotide (NaMN) to nicotinic acid adenine dinucleotide (NaAD). This is Probable nicotinate-nucleotide adenylyltransferase from Staphylococcus saprophyticus subsp. saprophyticus (strain ATCC 15305 / DSM 20229 / NCIMB 8711 / NCTC 7292 / S-41).